The chain runs to 301 residues: 5'-3' exonuclease (301 aa).

A 5'-3' exonuclease domain is found at 182 to 264 (GYADLALLRG…RVAADVPLPD (83 aa)).

Its function is as follows. 5'-3' exonuclease acting preferentially on double-stranded DNA. This is 5'-3' exonuclease from Streptomyces coelicolor (strain ATCC BAA-471 / A3(2) / M145).